The following is a 174-amino-acid chain: Matrix protein (174 aa).

As to quaternary structure, homomultimer. Interacts with nucleoprotein and with the cytoplasmic domain of glycoprotein.

It localises to the virion membrane. Its subcellular location is the host endomembrane system. Its function is as follows. Plays a major role in assembly and budding of virion. Completely covers the ribonucleoprotein coil and keep it in condensed bullet-shaped form. Inhibits viral transcription and stimulates replication. In Hordeum vulgare (Barley), this protein is Matrix protein (M).